A 102-amino-acid chain; its full sequence is Apolipoprotein A-II (102 aa).

The N-terminal stretch at 1–18 is a signal peptide; it reads MKLLAMVALLVTICSLEG. Met49 carries the post-translational modification Methionine sulfoxide.

Belongs to the apolipoprotein A2 family. Monomer. Interacts with NAXE and NDRG1. In terms of tissue distribution, plasma.

Its subcellular location is the secreted. Functionally, may stabilize HDL (high density lipoprotein) structure by its association with lipids, and affect the HDL metabolism. This chain is Apolipoprotein A-II (Apoa2), found in Rattus norvegicus (Rat).